The primary structure comprises 369 residues: Protein V (369 aa).

Disordered stretches follow at residues 1-24 and 38-320; these read MDQDALISKEDSEVEREASGGRES and SEPT…GHRR. The span at 7 to 20 shows a compositional bias: basic and acidic residues; that stretch reads ISKEDSEVEREASG. The span at 50-61 shows a compositional bias: polar residues; the sequence is LHNTINTLQRPG. Basic and acidic residues-rich tracts occupy residues 99-110 and 150-168; these read AEAHARNVDKQN and GAEDENREMAANPDKRGED. A phosphoserine; by host mark is found at Ser-249, Ser-257, and Ser-260. His-318, Cys-337, Cys-341, Cys-353, Cys-355, Cys-358, Cys-362, and Cys-365 together coordinate Zn(2+).

Belongs to the paramyxoviruses V protein family. As to quaternary structure, interacts with host IFIH1/MDA5 and DHX58/LGP2. Interacts with host IRF3. Interacts with host RIGI regulatory protein (via CARDs domain) and host TRIM25 (via SPRY domain); these interactions prevent TRIM25-mediated ubiquitination of RIG-I and disrupts downstream RIG-I signaling.

The protein resides in the host cytoplasm. Functionally, plays an essential role in the inhibition of host immune response. Prevents the establishment of cellular antiviral state by blocking interferon-alpha/beta (IFN-alpha/beta) production and signaling pathway. Interacts with host IFIH1/MDA5 and DHX58/LGP2 to inhibit the transduction pathway involved in the activation of IFN-beta promoter, thus protecting the virus against cell antiviral state. Also interacts with and inhibits host IRF3. Blocks the type I interferon signaling pathway by disrupting the RIG-I signaling pathway. In Sendai virus (strain Hamamatsu) (SeV), this protein is Protein V (P/V/C).